The primary structure comprises 186 residues: Alkyl hydroperoxide reductase AhpD (186 aa).

Residue Cys132 is the Proton donor of the active site. Cys132 and Cys135 are joined by a disulfide. Cys135 functions as the Cysteine sulfenic acid (-SOH) intermediate in the catalytic mechanism.

This sequence belongs to the AhpD family.

It catalyses the reaction N(6)-[(R)-dihydrolipoyl]-L-lysyl-[lipoyl-carrier protein] + a hydroperoxide = N(6)-[(R)-lipoyl]-L-lysyl-[lipoyl-carrier protein] + an alcohol + H2O. Antioxidant protein with alkyl hydroperoxidase activity. Required for the reduction of the AhpC active site cysteine residues and for the regeneration of the AhpC enzyme activity. The chain is Alkyl hydroperoxide reductase AhpD from Anaeromyxobacter dehalogenans (strain 2CP-1 / ATCC BAA-258).